The primary structure comprises 205 residues: Outer-membrane lipoprotein LolB (205 aa).

Residues 1–17 (MRLRLFLAASALALLSG) form the signal peptide. C18 carries N-palmitoyl cysteine lipidation. The S-diacylglycerol cysteine moiety is linked to residue C18.

Belongs to the LolB family. As to quaternary structure, monomer.

The protein localises to the cell outer membrane. In terms of biological role, plays a critical role in the incorporation of lipoproteins in the outer membrane after they are released by the LolA protein. This is Outer-membrane lipoprotein LolB from Pseudomonas paraeruginosa (strain DSM 24068 / PA7) (Pseudomonas aeruginosa (strain PA7)).